We begin with the raw amino-acid sequence, 93 residues long: Small ribosomal subunit protein uS19 (93 aa).

The protein belongs to the universal ribosomal protein uS19 family.

In terms of biological role, protein S19 forms a complex with S13 that binds strongly to the 16S ribosomal RNA. The sequence is that of Small ribosomal subunit protein uS19 from Paenarthrobacter aurescens (strain TC1).